The chain runs to 337 residues: Large ribosomal subunit protein uL3 (337 aa).

Positions 1-26 are disordered; that stretch reads MTRHHQPRKGSVAFSPRKRVARETPR.

Belongs to the universal ribosomal protein uL3 family. In terms of assembly, part of the 50S ribosomal subunit. Forms a cluster with proteins L14 and L24e.

Its function is as follows. One of the primary rRNA binding proteins, it binds directly near the 3'-end of the 23S rRNA, where it nucleates assembly of the 50S subunit. This is Large ribosomal subunit protein uL3 from Methanosphaera stadtmanae (strain ATCC 43021 / DSM 3091 / JCM 11832 / MCB-3).